A 277-amino-acid polypeptide reads, in one-letter code: Large ribosomal subunit protein uL2 (277 aa).

Disordered regions lie at residues 35–57 and 222–277; these read RPLH…QGGG and GVAM…NRRR. Composition is skewed to basic residues over residues 37-57 and 268-277; these read LHSK…QGGG and VRRRKQNRRR.

Belongs to the universal ribosomal protein uL2 family. Part of the 50S ribosomal subunit. Forms a bridge to the 30S subunit in the 70S ribosome.

Functionally, one of the primary rRNA binding proteins. Required for association of the 30S and 50S subunits to form the 70S ribosome, for tRNA binding and peptide bond formation. It has been suggested to have peptidyltransferase activity; this is somewhat controversial. Makes several contacts with the 16S rRNA in the 70S ribosome. This chain is Large ribosomal subunit protein uL2, found in Frankia casuarinae (strain DSM 45818 / CECT 9043 / HFP020203 / CcI3).